The following is a 129-amino-acid chain: Large ribosomal subunit protein bL19 (129 aa).

The protein belongs to the bacterial ribosomal protein bL19 family.

Functionally, this protein is located at the 30S-50S ribosomal subunit interface and may play a role in the structure and function of the aminoacyl-tRNA binding site. The polypeptide is Large ribosomal subunit protein bL19 (Methylobacillus flagellatus (strain ATCC 51484 / DSM 6875 / VKM B-1610 / KT)).